The sequence spans 576 residues: Polyphenol oxidase 3 (576 aa).

Positions 61, 85, 94, 259, 263, and 296 each coordinate Cu cation. Positions 83-85 (CTH) form a cross-link, 2'-(S-cysteinyl)-histidine (Cys-His). Position 263 (His263) interacts with substrate. Residues 393–576 (FVTTQTENPA…ILDDIIHRVN (184 aa)) constitute a propeptide, removed in mature form.

This sequence belongs to the tyrosinase family. As to quaternary structure, tetramer composed of two subunits of PPO3 (H subunits) and two subunits of the as yet uncharacterized product of ORF239342 (L subunits). The cofactor is Cu(2+). The C-ter is probably cleaved after Gly-392 since the mature active protein is smaller than the protein encoded by the gene.

It carries out the reaction 2 L-dopa + O2 = 2 L-dopaquinone + 2 H2O. The catalysed reaction is L-tyrosine + O2 = L-dopaquinone + H2O. In terms of biological role, copper-containing oxidase that catalyzes both the o-hydroxylation of monophenols and the subsequent oxidation of the resulting o-diphenols into reactive o-quinones, which evolve spontaneously to produce intermediates, which associate in dark brown pigments. Involved in the initial step of melanin synthesis. Melanins constitute a mechanism of defense and resistance to stress such as UV radiations, free radicals, gamma rays, dehydratation and extreme temperatures, and contribute to the fungal cell-wall resistance against hydrolytic enzymes in avoiding cellular lysis. Fungal pigments are also involved in the formation and stability of spores. This chain is Polyphenol oxidase 3 (PPO3), found in Agaricus bisporus (White button mushroom).